A 367-amino-acid chain; its full sequence is Type II methyltransferase M.CviJI (367 aa).

Residues 3–367 form the SAM-dependent MTase C5-type domain; sequence FRTLELFAGI…EYLGYLVQYD (365 aa). Residue Cys73 is part of the active site.

The protein belongs to the class I-like SAM-binding methyltransferase superfamily. C5-methyltransferase family.

It carries out the reaction a 2'-deoxycytidine in DNA + S-adenosyl-L-methionine = a 5-methyl-2'-deoxycytidine in DNA + S-adenosyl-L-homocysteine + H(+). A methylase that recognizes the double-stranded sequence 5'-RGCY-3', methylates C-3 on both strands, and protects the DNA from cleavage by the CviJI endonuclease. This is Type II methyltransferase M.CviJI from Chlorella (PBCV-IL3A).